The following is a 126-amino-acid chain: Holo-[acyl-carrier-protein] synthase (126 aa).

Mg(2+) contacts are provided by D8 and E57.

This sequence belongs to the P-Pant transferase superfamily. AcpS family. The cofactor is Mg(2+).

Its subcellular location is the cytoplasm. It carries out the reaction apo-[ACP] + CoA = holo-[ACP] + adenosine 3',5'-bisphosphate + H(+). Its function is as follows. Transfers the 4'-phosphopantetheine moiety from coenzyme A to a Ser of acyl-carrier-protein. The polypeptide is Holo-[acyl-carrier-protein] synthase (Geobacter sulfurreducens (strain ATCC 51573 / DSM 12127 / PCA)).